The chain runs to 132 residues: Ig kappa chain V-III region MOPC 321 (132 aa).

The first 20 residues, 1–20 (METDTLLLWVLLLWVPGSTG), serve as a signal peptide directing secretion. A framework-1 region spans residues 21 to 43 (DIVLTQSPASLAVSLGQRATISC). A disulfide bridge connects residues Cys-43 and Cys-112. The tract at residues 44-58 (RASKSVNTYGNSFMZ) is complementarity-determining-1. The tract at residues 59-73 (WYZZKPGZPPKLLIY) is framework-2. Residues 74–80 (RASNLZS) are complementarity-determining-2. Positions 81–112 (GIPARFSGSGSRTBFTLTIBPVZABDVATYFC) are framework-3. Residues 113–121 (ZZSBZBPWT) form a complementarity-determining-3 region. Residues 122 to 131 (FGSGTKLEIK) are framework-4.

The protein is Ig kappa chain V-III region MOPC 321 of Mus musculus (Mouse).